The primary structure comprises 515 residues: Histidine ammonia-lyase (515 aa).

Residues 145 to 147 (ASG) constitute a cross-link (5-imidazolinone (Ala-Gly)). Serine 146 carries the post-translational modification 2,3-didehydroalanine (Ser).

It belongs to the PAL/histidase family. In terms of processing, contains an active site 4-methylidene-imidazol-5-one (MIO), which is formed autocatalytically by cyclization and dehydration of residues Ala-Ser-Gly.

The protein localises to the cytoplasm. It catalyses the reaction L-histidine = trans-urocanate + NH4(+). It participates in amino-acid degradation; L-histidine degradation into L-glutamate; N-formimidoyl-L-glutamate from L-histidine: step 1/3. The chain is Histidine ammonia-lyase from Gluconobacter oxydans (strain 621H) (Gluconobacter suboxydans).